We begin with the raw amino-acid sequence, 858 residues long: Rho GTPase-activating protein 17 (858 aa).

Residues 14–246 form the BAR domain; that stretch reads QTVGRAEKTE…MRAHQDKWAE (233 aa). In terms of domain architecture, Rho-GAP spans 252–442; the sequence is TPLEEHLKRS…PIIQHADWFF (191 aa). Residues 459 to 475 show a composition bias toward polar residues; it reads TPNSNHSSHTGNDSDSG. The tract at residues 459–482 is disordered; it reads TPNSNHSSHTGNDSDSGTLERKRP. At Ser484 the chain carries Phosphoserine. Residues 516–823 are disordered; that stretch reads RKHISPAFQP…VTDTNSRVSE (308 aa). Positions 543–552 are enriched in polar residues; the sequence is PSQSSRADSN. Over residues 553–563 the composition is skewed to low complexity; sequence SVGGPVPSSSG. Position 575 is a phosphoserine (Ser575). Residues 592–617 are compositionally biased toward polar residues; that stretch reads RNSNQITTVPNQAQTGGNSHQLSVGT. The span at 637–650 shows a compositional bias: pro residues; the sequence is APAPPKPGNPPPGH. Positions 653–702 are enriched in low complexity; it reads GQSSPGTGTSPKPSTRSPSPPQQQQQQQQQQQQQQQQQQQQQQQQQQQQQ. Residues Ser710 and Ser712 each carry the phosphoserine modification. Composition is skewed to pro residues over residues 716-729 and 738-756; these read IQAP…PPTQ and EPGP…PPPA. Phosphothreonine occurs at positions 742, 746, and 748. Positions 742–755 match the SH3-binding motif; sequence TPPQTPTPPSTPPP. Residue Ser751 is modified to Phosphoserine. Position 752 is a phosphothreonine (Thr752). Residues 757-769 are compositionally biased toward polar residues; sequence KQNSSQSETTQLH. Positions 784 to 794 are enriched in pro residues; that stretch reads RPSVPPPPNPP. The span at 806-823 shows a compositional bias: polar residues; it reads SVPTASRIVTDTNSRVSE.

Component of a complex whose core is composed of ARHGAP17, AMOT, PALS1, PATJ and PARD3/PAR3. Interacts with NHERF1, FNBP1, TRIP10, CAPZA (CAPZA1, CAPZA2 or CAPZA3), CAPZB, CD2AP and SH3KBP1/CIN85. Highly expressed in brain; neuron-specific (at protein level). Isoform 2, isoform 3 and isoform 4 are predominantly expressed in neuronal tissues and correlate well with the differentiation of neurons, while isoform 1 is strongly expressed in embryonic brain.

It localises to the membrane. The protein resides in the cytoplasm. Its subcellular location is the cell junction. The protein localises to the tight junction. In terms of biological role, rho GTPase-activating protein involved in the maintenance of tight junction by regulating the activity of CDC42, thereby playing a central role in apical polarity of epithelial cells. Specifically acts as a GTPase activator for the CDC42 GTPase by converting it to an inactive GDP-bound state. The complex formed with AMOT acts by regulating the uptake of polarity proteins at tight junctions, possibly by deciding whether tight junction transmembrane proteins are recycled back to the plasma membrane or sent elsewhere. Participates in the Ca(2+)-dependent regulation of exocytosis, possibly by catalyzing GTPase activity of Rho family proteins and by inducing the reorganization of the cortical actin filaments. Acts as a GTPase activator in vitro for RAC1. The protein is Rho GTPase-activating protein 17 (Arhgap17) of Rattus norvegicus (Rat).